We begin with the raw amino-acid sequence, 243 residues long: 3-deoxy-manno-octulosonate cytidylyltransferase (243 aa).

Belongs to the KdsB family.

It localises to the cytoplasm. The enzyme catalyses 3-deoxy-alpha-D-manno-oct-2-ulosonate + CTP = CMP-3-deoxy-beta-D-manno-octulosonate + diphosphate. The protein operates within nucleotide-sugar biosynthesis; CMP-3-deoxy-D-manno-octulosonate biosynthesis; CMP-3-deoxy-D-manno-octulosonate from 3-deoxy-D-manno-octulosonate and CTP: step 1/1. It functions in the pathway bacterial outer membrane biogenesis; lipopolysaccharide biosynthesis. Functionally, activates KDO (a required 8-carbon sugar) for incorporation into bacterial lipopolysaccharide in Gram-negative bacteria. This Helicobacter pylori (strain P12) protein is 3-deoxy-manno-octulosonate cytidylyltransferase.